We begin with the raw amino-acid sequence, 183 residues long: 1,6-anhydro-N-acetylmuramyl-L-alanine amidase AmpD (183 aa).

Residues 30 to 167 (LLVVHNISLP…APDRKTDPGP (138 aa)) form the N-acetylmuramoyl-L-alanine amidase domain. His34 contacts Zn(2+). Glu116 serves as the catalytic Proton acceptor. Zn(2+)-binding residues include His154 and Asp164.

The protein belongs to the N-acetylmuramoyl-L-alanine amidase 2 family. The cofactor is Zn(2+).

It is found in the cytoplasm. It carries out the reaction Hydrolyzes the link between N-acetylmuramoyl residues and L-amino acid residues in certain cell-wall glycopeptides.. Its function is as follows. Involved in cell wall peptidoglycan recycling. Specifically cleaves the amide bond between the lactyl group of N-acetylmuramic acid and the alpha-amino group of the L-alanine in degradation products containing an anhydro N-acetylmuramyl moiety. Is also involved in beta-lactamase induction. The sequence is that of 1,6-anhydro-N-acetylmuramyl-L-alanine amidase AmpD (ampD) from Escherichia coli (strain K12).